A 243-amino-acid polypeptide reads, in one-letter code: MSIIVFPAIDLKGGQVVRLAEGDMDRATVYGDDPADQARRFAEAGAEWLHVVDLDGAFAGRAVNAEAVEAIIKAFPGKVELGGGIRDRAGIDRWLALGVERVIIGTAALQNPDLVREAAKELPGRIVVGVDARDGFVATHGWAEVSTVGITDLADRFADAGVASLLFTDVGRDGLLKGCNVEATVALARHASIPVIASGGVASIADIAALVPHAGDGIEGVITGRALYDGRLDLAEALRVARG.

The Proton acceptor role is filled by Asp10. The active-site Proton donor is the Asp131.

It belongs to the HisA/HisF family.

It localises to the cytoplasm. It carries out the reaction 1-(5-phospho-beta-D-ribosyl)-5-[(5-phospho-beta-D-ribosylamino)methylideneamino]imidazole-4-carboxamide = 5-[(5-phospho-1-deoxy-D-ribulos-1-ylimino)methylamino]-1-(5-phospho-beta-D-ribosyl)imidazole-4-carboxamide. It functions in the pathway amino-acid biosynthesis; L-histidine biosynthesis; L-histidine from 5-phospho-alpha-D-ribose 1-diphosphate: step 4/9. The protein is 1-(5-phosphoribosyl)-5-[(5-phosphoribosylamino)methylideneamino] imidazole-4-carboxamide isomerase of Rhizorhabdus wittichii (strain DSM 6014 / CCUG 31198 / JCM 15750 / NBRC 105917 / EY 4224 / RW1) (Sphingomonas wittichii).